A 128-amino-acid polypeptide reads, in one-letter code: Ferric uptake regulation protein homolog (128 aa).

Belongs to the Fur family.

The sequence is that of Ferric uptake regulation protein homolog from Archaeoglobus fulgidus (strain ATCC 49558 / DSM 4304 / JCM 9628 / NBRC 100126 / VC-16).